The chain runs to 180 residues: Translation initiation factor IF-3 (180 aa).

Belongs to the IF-3 family. As to quaternary structure, monomer.

Its subcellular location is the cytoplasm. In terms of biological role, IF-3 binds to the 30S ribosomal subunit and shifts the equilibrium between 70S ribosomes and their 50S and 30S subunits in favor of the free subunits, thus enhancing the availability of 30S subunits on which protein synthesis initiation begins. This Xylella fastidiosa (strain Temecula1 / ATCC 700964) protein is Translation initiation factor IF-3.